Reading from the N-terminus, the 540-residue chain is V-set and immunoglobulin domain-containing protein 10 (540 aa).

A signal peptide spans 1–30; it reads MAAGGSAPEPRVLVCLGALLAGWVAVGLEA. Ig-like C2-type domains follow at residues 31 to 119, 123 to 215, 223 to 309, and 311 to 404; these read VVIG…WLQV, PYQI…RKVT, PPPS…VQIR, and PSLL…IWLS. Residues 31-413 lie on the Extracellular side of the membrane; it reads VVIGEVHENV…SVKEPLNIGG (383 aa). 8 N-linked (GlcNAc...) asparagine glycosylation sites follow: Asn39, Asn46, Asn70, Asn108, Asn138, Asn171, Asn180, and Asn198. Residues Cys44 and Cys103 are joined by a disulfide bond. 2 cysteine pairs are disulfide-bonded: Cys153-Cys201 and Cys245-Cys290. Asn326 is a glycosylation site (N-linked (GlcNAc...) asparagine). Cys331 and Cys388 form a disulfide bridge. A helical transmembrane segment spans residues 414–434; sequence IVGTIVSLLLLGLAIISGLLL. The Cytoplasmic portion of the chain corresponds to 435-540; the sequence is HYSPVFCWKV…DIVQEEDRPV (106 aa). Residues 461-477 are compositionally biased toward acidic residues; sequence DSEEEEEEEEEEEEDAA. 2 disordered regions span residues 461 to 500 and 513 to 540; these read DSEE…QDHI and QMGN…DRPV. A compositionally biased stretch (basic and acidic residues) spans 482 to 500; it reads EGAREREELPKEIPKQDHI. A compositionally biased stretch (acidic residues) spans 521–534; sequence LQDDSSEEQSDIVQ.

It localises to the membrane. The sequence is that of V-set and immunoglobulin domain-containing protein 10 (VSIG10) from Homo sapiens (Human).